The primary structure comprises 316 residues: HPr kinase/phosphorylase (316 aa).

Catalysis depends on residues H141 and K162. Position 156–163 (156–163) interacts with ATP; the sequence is GESGVGKS. A Mg(2+)-binding site is contributed by S163. The active-site Proton acceptor; for phosphorylation activity. Proton donor; for dephosphorylation activity is the D180. Residues 204 to 213 are important for the catalytic mechanism of both phosphorylation and dephosphorylation; the sequence is MEIRGIGIID. E205 is a binding site for Mg(2+). R246 is a catalytic residue. The important for the catalytic mechanism of dephosphorylation stretch occupies residues 267 to 272; the sequence is PVKVGR.

The protein belongs to the HPrK/P family. In terms of assembly, homohexamer. Mg(2+) serves as cofactor.

It carries out the reaction [HPr protein]-L-serine + ATP = [HPr protein]-O-phospho-L-serine + ADP + H(+). It catalyses the reaction [HPr protein]-O-phospho-L-serine + phosphate + H(+) = [HPr protein]-L-serine + diphosphate. Functionally, catalyzes the ATP- as well as the pyrophosphate-dependent phosphorylation of a specific serine residue in HPr, a phosphocarrier protein of the phosphoenolpyruvate-dependent sugar phosphotransferase system (PTS). HprK/P also catalyzes the pyrophosphate-producing, inorganic phosphate-dependent dephosphorylation (phosphorolysis) of seryl-phosphorylated HPr (P-Ser-HPr). The two antagonistic activities of HprK/P are regulated by several intracellular metabolites, which change their concentration in response to the absence or presence of rapidly metabolisable carbon sources (glucose, fructose, etc.) in the growth medium. Therefore, by controlling the phosphorylation state of HPr, HPrK/P is a sensor enzyme that plays a major role in the regulation of carbon metabolism and sugar transport: it mediates carbon catabolite repression (CCR), and regulates PTS-catalyzed carbohydrate uptake and inducer exclusion. This chain is HPr kinase/phosphorylase, found in Lactobacillus delbrueckii subsp. bulgaricus (strain ATCC 11842 / DSM 20081 / BCRC 10696 / JCM 1002 / NBRC 13953 / NCIMB 11778 / NCTC 12712 / WDCM 00102 / Lb 14).